Consider the following 213-residue polypeptide: Thiamine-phosphate synthase (213 aa).

Residues 40–44 (QYRDK) and asparagine 72 contribute to the 4-amino-2-methyl-5-(diphosphooxymethyl)pyrimidine site. Mg(2+) contacts are provided by aspartate 73 and aspartate 91. Threonine 110 contributes to the 4-amino-2-methyl-5-(diphosphooxymethyl)pyrimidine binding site. Residue 137–139 (SHT) participates in 2-[(2R,5Z)-2-carboxy-4-methylthiazol-5(2H)-ylidene]ethyl phosphate binding. Position 140 (lysine 140) interacts with 4-amino-2-methyl-5-(diphosphooxymethyl)pyrimidine. Glycine 167 is a 2-[(2R,5Z)-2-carboxy-4-methylthiazol-5(2H)-ylidene]ethyl phosphate binding site.

It belongs to the thiamine-phosphate synthase family. Mg(2+) is required as a cofactor.

It catalyses the reaction 2-[(2R,5Z)-2-carboxy-4-methylthiazol-5(2H)-ylidene]ethyl phosphate + 4-amino-2-methyl-5-(diphosphooxymethyl)pyrimidine + 2 H(+) = thiamine phosphate + CO2 + diphosphate. It carries out the reaction 2-(2-carboxy-4-methylthiazol-5-yl)ethyl phosphate + 4-amino-2-methyl-5-(diphosphooxymethyl)pyrimidine + 2 H(+) = thiamine phosphate + CO2 + diphosphate. The enzyme catalyses 4-methyl-5-(2-phosphooxyethyl)-thiazole + 4-amino-2-methyl-5-(diphosphooxymethyl)pyrimidine + H(+) = thiamine phosphate + diphosphate. It functions in the pathway cofactor biosynthesis; thiamine diphosphate biosynthesis; thiamine phosphate from 4-amino-2-methyl-5-diphosphomethylpyrimidine and 4-methyl-5-(2-phosphoethyl)-thiazole: step 1/1. In terms of biological role, condenses 4-methyl-5-(beta-hydroxyethyl)thiazole monophosphate (THZ-P) and 2-methyl-4-amino-5-hydroxymethyl pyrimidine pyrophosphate (HMP-PP) to form thiamine monophosphate (TMP). The protein is Thiamine-phosphate synthase of Stutzerimonas stutzeri (strain A1501) (Pseudomonas stutzeri).